The primary structure comprises 594 residues: Frizzled and smoothened-like protein A (594 aa).

The signal sequence occupies residues 1–22 (MVDIRKSLFFIIFFIFYNYVNS). The Extracellular portion of the chain corresponds to 23–248 (QKAINSDAFC…NEWYQFKDLT (226 aa)). One can recognise an FZ domain in the interval 27–173 (NSDAFCQKKT…SNYDLQCLNI (147 aa)). Intrachain disulfides connect Cys-32/Cys-98 and Cys-41/Cys-91. N-linked (GlcNAc...) asparagine glycans are attached at residues Asn-55 and Asn-106. An intrachain disulfide couples Cys-117 to Cys-170. N-linked (GlcNAc...) asparagine glycosylation is found at Asn-182, Asn-189, Asn-195, and Asn-206. The helical transmembrane segment at 249–269 (TVTGVISFVCIFFNIFIYGFL) threads the bilayer. At 270-277 (NKKHDRHT) the chain is on the cytoplasmic side. A helical transmembrane segment spans residues 278-298 (IGILCLSFSLWCCMLSDLIVA). Over 299–329 (SSPDYSLVCPEPGRFARIHDSRCVANGIIFQ) the chain is Extracellular. The chain crosses the membrane as a helical span at residues 330–350 (WGAVCTTMFWSAMAIDLYLVI). The Cytoplasmic portion of the chain corresponds to 351 to 361 (KKLSLPAFTVK). The chain crosses the membrane as a helical span at residues 362 to 382 (YFVAAIFTLALLFTTVPLAWD). The Extracellular segment spans residues 383 to 403 (DYGYGFGGVGCWIMSNSVQNG). Residues 404–424 (CFWIPMLICLLIGAVSICLII) form a helical membrane-spanning segment. At 425 to 448 (YEIVKVFKNVGRSGISIILANARL) the chain is on the cytoplasmic side. The chain crosses the membrane as a helical span at residues 449–469 (FGIVSFIFIEYIYLFVYHFWV). At 470 to 507 (QENTEKFTQNITDWVICVQTTGSSDGCPLPKAVPYATQ) the chain is on the extracellular side. Asn-479 carries N-linked (GlcNAc...) asparagine glycosylation. Residues 508-528 (FIFLFFLRLLGIEVCIFYGIN) form a helical membrane-spanning segment. At 529–594 (SRSKNIILES…SKNGGDDDDL (66 aa)) the chain is on the cytoplasmic side.

The protein belongs to the G-protein coupled receptor Fz/Smo family.

The protein resides in the membrane. The protein is Frizzled and smoothened-like protein A (fslA) of Dictyostelium discoideum (Social amoeba).